We begin with the raw amino-acid sequence, 242 residues long: Venom nerve growth factor 3 (242 aa).

The N-terminal stretch at 1–18 (MSMLCYTLIIAFLIGIWA) is a signal peptide. Residues 19-125 (APQSEDNVPL…ALNRNIQAKR (107 aa)) constitute a propeptide that is removed on maturation. Residues 45–69 (HEGLKTSRNTDQRHPAPKKVDDQEP) are disordered. The segment covering 46-66 (EGLKTSRNTDQRHPAPKKVDD) has biased composition (basic and acidic residues). Cystine bridges form between C139-C203, C181-C231, and C191-C233.

It belongs to the NGF-beta family. As to quaternary structure, homodimer; non-covalently linked. In terms of tissue distribution, expressed by the venom gland.

Its subcellular location is the secreted. Its function is as follows. Nerve growth factor is important for the development and maintenance of the sympathetic and sensory nervous systems. It stimulates division and differentiation of sympathetic and embryonic sensory neurons as well as basal forebrain cholinergic neurons in the brain. Its relevance in the snake venom is not clear. However, it has been shown to inhibit metalloproteinase-dependent proteolysis of platelet glycoprotein Ib alpha, suggesting a metalloproteinase inhibition to prevent metalloprotease autodigestion and/or protection against prey proteases. Binds a lipid between the two protein chains in the homodimer. The lipid-bound form promotes histamine relase from mouse mast cells, contrary to the lipid-free form. This chain is Venom nerve growth factor 3, found in Pseudechis australis (Mulga snake).